A 122-amino-acid polypeptide reads, in one-letter code: Large ribosomal subunit protein uL14 (122 aa).

The protein belongs to the universal ribosomal protein uL14 family. Part of the 50S ribosomal subunit. Forms a cluster with proteins L3 and L19. In the 70S ribosome, L14 and L19 interact and together make contacts with the 16S rRNA in bridges B5 and B8.

Its function is as follows. Binds to 23S rRNA. Forms part of two intersubunit bridges in the 70S ribosome. The polypeptide is Large ribosomal subunit protein uL14 (Cutibacterium acnes (strain DSM 16379 / KPA171202) (Propionibacterium acnes)).